A 73-amino-acid polypeptide reads, in one-letter code: Arabinogalactan protein 16 (73 aa).

The N-terminal stretch at Met-1 to Ala-26 is a signal peptide. Gln-27 is modified (pyrrolidone carboxylic acid). 4-hydroxyproline is present on residues Pro-31, Pro-33, and Pro-35. O-linked (Ara...) hydroxyproline glycosylation is found at Pro-31, Pro-33, and Pro-35. A lipid anchor (GPI-anchor amidated serine) is attached at Ser-37. Positions Asp-38–Phe-73 are cleaved as a propeptide — removed in mature form.

This sequence belongs to the AG-peptide AGP family. Contains 4-hydroxyproline; hydroxylated on Pro-31, Pro-33 and Pro-35. Post-translationally, O-glycosylated on hydroxyprolines; noncontiguous hydroxylproline residues are glycosylated with arabinogalactan. As to expression, predominantly expressed in flowers.

Its subcellular location is the cell membrane. Functionally, proteoglycan that seems to be implicated in diverse developmental roles such as differentiation, cell-cell recognition, embryogenesis and programmed cell death. In Arabidopsis thaliana (Mouse-ear cress), this protein is Arabinogalactan protein 16.